The chain runs to 859 residues: Leucine--tRNA ligase (859 aa).

The 'HIGH' region signature appears at 42 to 52 (PYPSGRLHMGH). The 'KMSKS' region motif lies at 618–622 (KMSKS). Lys-621 is a binding site for ATP.

Belongs to the class-I aminoacyl-tRNA synthetase family.

It localises to the cytoplasm. It catalyses the reaction tRNA(Leu) + L-leucine + ATP = L-leucyl-tRNA(Leu) + AMP + diphosphate. In Shewanella pealeana (strain ATCC 700345 / ANG-SQ1), this protein is Leucine--tRNA ligase.